The sequence spans 66 residues: Large ribosomal subunit protein bL33c (66 aa).

This sequence belongs to the bacterial ribosomal protein bL33 family.

The protein resides in the plastid. It is found in the chloroplast. The protein is Large ribosomal subunit protein bL33c of Solanum bulbocastanum (Wild potato).